The primary structure comprises 339 residues: Heat-inducible transcription repressor HrcA (339 aa).

It belongs to the HrcA family.

Its function is as follows. Negative regulator of class I heat shock genes (grpE-dnaK-dnaJ and groELS operons). Prevents heat-shock induction of these operons. The chain is Heat-inducible transcription repressor HrcA from Leifsonia xyli subsp. xyli (strain CTCB07).